The following is a 184-amino-acid chain: Cysteine proteinase inhibitor 3 (184 aa).

Positions 1–35 (MLRRRGFCCCSGAPAAAAAALLLLAVAAAAPRAAG) are cleaved as a signal peptide. The Cystatin domain occupies 48–134 (GMLAAIRREQ…KAVVEFRHVG (87 aa)). A Secondary area of contact motif is present at residues 90–94 (QVVTG). The interval 138–165 (SQSATAADDNAGQDTADPTVASRNDLHN) is disordered.

This sequence belongs to the cystatin family. Phytocystatin subfamily.

Its subcellular location is the secreted. Functionally, specific inhibitor of cysteine proteinases. Probably involved in the regulation of endogenous processes and in defense against pests and pathogens. This chain is Cysteine proteinase inhibitor 3, found in Oryza sativa subsp. japonica (Rice).